We begin with the raw amino-acid sequence, 140 residues long: MAKKVKAIVKLQIPAGKANPAPPIGPALGQHGINIMGFCKEYNDRTASMAGTIVPAEITIYDDRSFTFITKTPPAADLLKKAAGVEAGSGTPSKSVVAVISKGQLREIASVKMKDLNAVNIEGAERIIEGTARSMGIKVE.

This sequence belongs to the universal ribosomal protein uL11 family. Part of the ribosomal stalk of the 50S ribosomal subunit. Interacts with L10 and the large rRNA to form the base of the stalk. L10 forms an elongated spine to which L12 dimers bind in a sequential fashion forming a multimeric L10(L12)X complex. One or more lysine residues are methylated.

Its function is as follows. Forms part of the ribosomal stalk which helps the ribosome interact with GTP-bound translation factors. The polypeptide is Large ribosomal subunit protein uL11 (Dehalococcoides mccartyi (strain ATCC BAA-2266 / KCTC 15142 / 195) (Dehalococcoides ethenogenes (strain 195))).